The following is a 380-amino-acid chain: Peptide chain release factor 1-like, mitochondrial (380 aa).

The transit peptide at 1 to 26 directs the protein to the mitochondrion; sequence MRSRVLWGAARWLWPRRAVGPARRPL. A coiled-coil region spans residues 63–117; the sequence is ELLAVIKLLNEKERELRETEHLLHDENEDLRKLAENEITLCQKEITQLKHQIILL. Residues 236–300 form a GGQ domain region; it reads PKDLRIDTKR…LRAKLYSMHL (65 aa). A GGQ motif is present at residues 250-252; the sequence is GGQ. Q252 is subject to N5-methylglutamine.

It belongs to the prokaryotic/mitochondrial release factor family. In terms of processing, methylation of glutamine in the GGQ triplet by HEMK1 is conserved from bacteria to mammals. Expressed in skeletal muscle (at protein level).

The protein localises to the mitochondrion. Functionally, mitochondrial peptide chain release factor that directs the termination of translation in response to the peptide chain termination codons UAA and UAG. The chain is Peptide chain release factor 1-like, mitochondrial from Homo sapiens (Human).